The primary structure comprises 274 residues: Large ribosomal subunit protein uL2 (274 aa).

Residues Val220–Phe265 form a disordered region. The segment covering Pro227–Ala239 has biased composition (basic and acidic residues). Residues Lys249–Asn262 are compositionally biased toward basic residues.

The protein belongs to the universal ribosomal protein uL2 family. Part of the 50S ribosomal subunit. Forms a bridge to the 30S subunit in the 70S ribosome.

Its function is as follows. One of the primary rRNA binding proteins. Required for association of the 30S and 50S subunits to form the 70S ribosome, for tRNA binding and peptide bond formation. It has been suggested to have peptidyltransferase activity; this is somewhat controversial. Makes several contacts with the 16S rRNA in the 70S ribosome. This Chloroflexus aurantiacus (strain ATCC 29364 / DSM 637 / Y-400-fl) protein is Large ribosomal subunit protein uL2.